The primary structure comprises 293 residues: 3-methyl-2-oxobutanoate hydroxymethyltransferase (293 aa).

Residues 1 to 25 (MTDSPTAGTPYGTLPPASPLPQRRP) form a disordered region. Residues Asp67 and Asp110 each contribute to the Mg(2+) site. 3-methyl-2-oxobutanoate is bound by residues 67 to 68 (DS), Asp110, and Lys139. Glu141 contacts Mg(2+). Glu208 serves as the catalytic Proton acceptor.

Belongs to the PanB family. Homodecamer; pentamer of dimers. Mg(2+) is required as a cofactor.

Its subcellular location is the cytoplasm. The catalysed reaction is 3-methyl-2-oxobutanoate + (6R)-5,10-methylene-5,6,7,8-tetrahydrofolate + H2O = 2-dehydropantoate + (6S)-5,6,7,8-tetrahydrofolate. It functions in the pathway cofactor biosynthesis; (R)-pantothenate biosynthesis; (R)-pantoate from 3-methyl-2-oxobutanoate: step 1/2. In terms of biological role, catalyzes the reversible reaction in which hydroxymethyl group from 5,10-methylenetetrahydrofolate is transferred onto alpha-ketoisovalerate to form ketopantoate. The chain is 3-methyl-2-oxobutanoate hydroxymethyltransferase from Acidovorax sp. (strain JS42).